We begin with the raw amino-acid sequence, 785 residues long: Penicillin-binding protein 1A (785 aa).

Topologically, residues 1–6 (MYKSLF) are cytoplasmic. A helical; Signal-anchor for type II membrane protein transmembrane segment spans residues 7–27 (FFLKIFAILILLGCSVTAYII). The Periplasmic portion of the chain corresponds to 28-785 (YHYSHDLPDY…GISDQSQEIY (758 aa)). The interval 49–220 (TRIYSRDGKL…SELNPDKNYS (172 aa)) is transglycosylase. The Proton donor; for transglycosylase activity role is filled by Glu-87. A transpeptidase region spans residues 398–711 (DVIVVEPIKD…SNVVLPIFID (314 aa)). The Acyl-ester intermediate; for transpeptidase activity role is filled by Ser-457.

The protein in the N-terminal section; belongs to the glycosyltransferase 51 family. It in the C-terminal section; belongs to the transpeptidase family.

It localises to the cell inner membrane. It carries out the reaction [GlcNAc-(1-&gt;4)-Mur2Ac(oyl-L-Ala-gamma-D-Glu-L-Lys-D-Ala-D-Ala)](n)-di-trans,octa-cis-undecaprenyl diphosphate + beta-D-GlcNAc-(1-&gt;4)-Mur2Ac(oyl-L-Ala-gamma-D-Glu-L-Lys-D-Ala-D-Ala)-di-trans,octa-cis-undecaprenyl diphosphate = [GlcNAc-(1-&gt;4)-Mur2Ac(oyl-L-Ala-gamma-D-Glu-L-Lys-D-Ala-D-Ala)](n+1)-di-trans,octa-cis-undecaprenyl diphosphate + di-trans,octa-cis-undecaprenyl diphosphate + H(+). The enzyme catalyses Preferential cleavage: (Ac)2-L-Lys-D-Ala-|-D-Ala. Also transpeptidation of peptidyl-alanyl moieties that are N-acyl substituents of D-alanine.. It participates in cell wall biogenesis; peptidoglycan biosynthesis. Its function is as follows. Cell wall formation. Synthesis of cross-linked peptidoglycan from the lipid intermediates. The enzyme has a penicillin-insensitive transglycosylase N-terminal domain (formation of linear glycan strands) and a penicillin-sensitive transpeptidase C-terminal domain (cross-linking of the peptide subunits). This Rickettsia typhi (strain ATCC VR-144 / Wilmington) protein is Penicillin-binding protein 1A (mrcA).